The primary structure comprises 216 residues: UPF0502 protein Spea_2482 (216 aa).

This sequence belongs to the UPF0502 family.

In Shewanella pealeana (strain ATCC 700345 / ANG-SQ1), this protein is UPF0502 protein Spea_2482.